Consider the following 632-residue polypeptide: Pescadillo homolog (632 aa).

Residues 306-341 (GDDADVDMDEGAKETDEEEDEDFVERPSKAQEVDDV) are disordered. The span at 307 to 328 (DDADVDMDEGAKETDEEEDEDF) shows a compositional bias: acidic residues. In terms of domain architecture, BRCT spans 361-459 (RQNLLFSPYT…KIISSEGYGP (99 aa)). Disordered stretches follow at residues 485–535 (GEKA…QNPS), 565–585 (TKVHAKKVPASQKEKKGEEDL), and 601–632 (MQYSNREKAAEKEKLEKKRKAIEKRKAKEAKA). Residues 492–516 (QEGEEEEEAAEQDEGESEDEEEDGK) show a composition bias toward acidic residues. Residues 521–531 (AEYPPALLAAA) are compositionally biased toward low complexity. 2 stretches are compositionally biased toward basic and acidic residues: residues 576–585 (QKEKKGEEDL) and 605–616 (NREKAAEKEKLE). The stretch at 595–632 (AKLYEKMQYSNREKAAEKEKLEKKRKAIEKRKAKEAKA) forms a coiled coil.

This sequence belongs to the pescadillo family. In terms of assembly, component of the NOP7 complex, composed of ERB1, NOP7 and YTM1. The complex is held together by ERB1, which interacts with NOP7 via its N-terminal domain and with YTM1 via a high-affinity interaction between the seven-bladed beta-propeller domains of the 2 proteins. The NOP7 complex associates with the 66S pre-ribosome.

The protein localises to the nucleus. It is found in the nucleolus. Its subcellular location is the nucleoplasm. Functionally, component of the NOP7 complex, which is required for maturation of the 25S and 5.8S ribosomal RNAs and formation of the 60S ribosome. This Cryptococcus neoformans var. neoformans serotype D (strain B-3501A) (Filobasidiella neoformans) protein is Pescadillo homolog.